A 389-amino-acid polypeptide reads, in one-letter code: Phosphoglycerate kinase (389 aa).

Substrate contacts are provided by residues 21–23, Arg36, 59–62, Arg112, and Arg145; these read DLN and HLGR. ATP contacts are provided by residues Lys196, Glu313, and 342-345; that span reads GGDT.

It belongs to the phosphoglycerate kinase family. Monomer.

The protein localises to the cytoplasm. The enzyme catalyses (2R)-3-phosphoglycerate + ATP = (2R)-3-phospho-glyceroyl phosphate + ADP. It functions in the pathway carbohydrate degradation; glycolysis; pyruvate from D-glyceraldehyde 3-phosphate: step 2/5. The polypeptide is Phosphoglycerate kinase (Mannheimia succiniciproducens (strain KCTC 0769BP / MBEL55E)).